Consider the following 1385-residue polypeptide: Serine-aspartate repeat-containing protein D (1385 aa).

The signal sequence occupies residues methionine 1–isoleucine 35. The short motif at phenylalanine 23–serine 34 is the YSIRK-G/S signaling motif element. Positions leucine 36–glutamate 568 are ligand binding A region. 2 disordered regions span residues glutamate 54 to glutamate 162 and glutamate 200 to alanine 224. Composition is skewed to polar residues over residues glutamate 62–glutamine 71 and glutamate 94–lysine 109. Over residues lysine 130–asparagine 145 the composition is skewed to basic and acidic residues. A compositionally biased stretch (polar residues) spans threonine 146–glycine 155. Residues asparagine 205 to asparagine 214 show a composition bias toward low complexity. 5 CNA-B domains span residues valine 569–proline 680, lysine 681–proline 791, lysine 792–proline 901, threonine 902–proline 1012, and lysine 1013–threonine 1123. Disordered regions lie at residues phenylalanine 856–isoleucine 886, tyrosine 972–threonine 992, and phenylalanine 1077–alanine 1361. 2 stretches are compositionally biased toward polar residues: residues serine 860–serine 869 and tyrosine 972–asparagine 981. Positions threonine 1081–threonine 1090 are enriched in low complexity. Acidic residues-rich tracts occupy residues threonine 1091 to glutamate 1101 and tyrosine 1118 to serine 1324. The LPXTG sorting signal signature appears at leucine 1348 to glycine 1352. Threonine 1351 carries the post-translational modification Pentaglycyl murein peptidoglycan amidated threonine. Residues glycine 1352–lysine 1385 constitute a propeptide, removed by sortase.

It belongs to the serine-aspartate repeat-containing protein (SDr) family. Interacts with host DSG1; this interaction increases S.aureus adherence to keratinocytes.

The protein localises to the secreted. Its subcellular location is the cell wall. Its function is as follows. Cell surface-associated calcium-binding protein which plays an important role in adhesion and pathogenesis. Mediates interactions with components of the extracellular matrix such as host DSG1 to promote bacterial adhesion to host cells. Contributes to the resistance to killing by innate immune components such as neutrophils present in blood and thus attenuates bacterial clearance. The polypeptide is Serine-aspartate repeat-containing protein D (sdrD) (Staphylococcus aureus (strain Mu50 / ATCC 700699)).